The primary structure comprises 252 residues: Imidazole glycerol phosphate synthase subunit HisF (252 aa).

Catalysis depends on residues Asp11 and Asp130.

It belongs to the HisA/HisF family. As to quaternary structure, heterodimer of HisH and HisF.

Its subcellular location is the cytoplasm. It carries out the reaction 5-[(5-phospho-1-deoxy-D-ribulos-1-ylimino)methylamino]-1-(5-phospho-beta-D-ribosyl)imidazole-4-carboxamide + L-glutamine = D-erythro-1-(imidazol-4-yl)glycerol 3-phosphate + 5-amino-1-(5-phospho-beta-D-ribosyl)imidazole-4-carboxamide + L-glutamate + H(+). It participates in amino-acid biosynthesis; L-histidine biosynthesis; L-histidine from 5-phospho-alpha-D-ribose 1-diphosphate: step 5/9. IGPS catalyzes the conversion of PRFAR and glutamine to IGP, AICAR and glutamate. The HisF subunit catalyzes the cyclization activity that produces IGP and AICAR from PRFAR using the ammonia provided by the HisH subunit. The protein is Imidazole glycerol phosphate synthase subunit HisF of Acinetobacter baumannii (strain AB307-0294).